We begin with the raw amino-acid sequence, 291 residues long: Phytanoyl-CoA dioxygenase domain-containing protein 1 (291 aa).

At Thr-55 the chain carries Phosphothreonine. 2-oxoglutarate is bound by residues Lys-102, Met-141, 156–158 (HQD), and Trp-174. His-156 and Asp-158 together coordinate Fe cation. His-246 provides a ligand contact to Fe cation. 2 residues coordinate 2-oxoglutarate: Ser-248 and Arg-257.

This sequence belongs to the PhyH family. PHYHD1 subfamily. Fe cation serves as cofactor.

In terms of biological role, 2-oxoglutarate(2OG)-dependent dioxygenase that catalyzes the conversion of 2-oxoglutarate to succinate and CO(2) in an iron-dependent manner. However, does not couple 2OG turnover to the hydroxylation of acyl-coenzyme A derivatives, implying that it is not directly involved in phytanoyl coenzyme-A metabolism. Does not show detectable activity towards fatty acid CoA thioesters. The sequence is that of Phytanoyl-CoA dioxygenase domain-containing protein 1 (Phyhd1) from Rattus norvegicus (Rat).